The sequence spans 299 residues: MATH domain and coiled-coil domain-containing protein At2g42460 (299 aa).

The region spanning 7 to 130 is the MATH domain; it reads QKTFTWKIEN…NNTLFIEVYI (124 aa). Positions 225–262 form a coiled coil; the sequence is FRVKWLKSKLDEISLARKKKVDADAARVQELEGKVKNQ.

This chain is MATH domain and coiled-coil domain-containing protein At2g42460, found in Arabidopsis thaliana (Mouse-ear cress).